The primary structure comprises 115 residues: Cyclin-dependent protein kinase inhibitor SMR3 (115 aa).

The span at 17-36 (KIRLPTRPELDIPDSDHEDP) shows a compositional bias: basic and acidic residues. The tract at residues 17-82 (KIRLPTRPEL…RSSGTKRKLT (66 aa)) is disordered. Positions 67-81 (RKPKPNRSSGTKRKL) are enriched in basic residues.

As to quaternary structure, interacts with CDKA-1 and D-type cyclins. As to expression, expressed at low levels in roots and stems.

It is found in the nucleus. Probable cyclin-dependent protein kinase (CDK) inhibitor that functions as a repressor of mitosis in the endoreduplication cell cycle. The polypeptide is Cyclin-dependent protein kinase inhibitor SMR3 (Arabidopsis thaliana (Mouse-ear cress)).